The following is a 505-amino-acid chain: Probable ribonuclease FAU-1 (505 aa).

The tract at residues 389-408 is disordered; it reads ISGHGSGTYDELGTPRESGD.

The protein belongs to the FAU-1 family.

Probable RNase involved in rRNA stability through maturation and/or degradation of precursor rRNAs. Binds to RNA in loop regions with AU-rich sequences. This Haloquadratum walsbyi (strain DSM 16790 / HBSQ001) protein is Probable ribonuclease FAU-1.